The primary structure comprises 572 residues: Receptor-type adenylate cyclase GRESAG 4.2 (572 aa).

Topologically, residues 1–225 are extracellular; it reads RKTLLTFGLN…PNGNALTPAQ (225 aa). N-linked (GlcNAc...) asparagine glycans are attached at residues Asn10, Asn77, and Asn152. The helical transmembrane segment at 226–251 threads the bilayer; the sequence is LDWCGWCRFACADTGSRLTVFLCCIM. Residues 252–572 are Cytoplasmic-facing; it reads RNKRDNDNAP…TVRRLSVALQ (321 aa). One can recognise a Guanylate cyclase domain in the interval 269–424; sequence TLIFTDIESS…QTANTAARTE (156 aa). 2 residues coordinate Mg(2+): Asp274 and Asp317.

The protein belongs to the adenylyl cyclase class-3 family. Requires Mg(2+) as cofactor.

Its subcellular location is the cell membrane. The enzyme catalyses ATP = 3',5'-cyclic AMP + diphosphate. Its function is as follows. Could act as a receptor for an unknown ligand. In Trypanosoma brucei brucei, this protein is Receptor-type adenylate cyclase GRESAG 4.2 (GRESAG 4.2).